We begin with the raw amino-acid sequence, 150 residues long: Holo-[acyl-carrier-protein] synthase (150 aa).

Aspartate 8 and glutamate 57 together coordinate Mg(2+).

This sequence belongs to the P-Pant transferase superfamily. AcpS family. Mg(2+) is required as a cofactor.

It localises to the cytoplasm. It carries out the reaction apo-[ACP] + CoA = holo-[ACP] + adenosine 3',5'-bisphosphate + H(+). Functionally, transfers the 4'-phosphopantetheine moiety from coenzyme A to a Ser of acyl-carrier-protein. This chain is Holo-[acyl-carrier-protein] synthase, found in Jannaschia sp. (strain CCS1).